We begin with the raw amino-acid sequence, 315 residues long: Phosphatidylglycerol--prolipoprotein diacylglyceryl transferase (315 aa).

2 helical membrane passes run 19 to 39 (FTIH…VWIL) and 93 to 113 (VWEG…VAFL). Position 141 (Arg-141) interacts with a 1,2-diacyl-sn-glycero-3-phospho-(1'-sn-glycerol). 2 consecutive transmembrane segments (helical) span residues 188–208 (LFHP…ALII) and 256–276 (VWTA…LYQY).

It belongs to the Lgt family.

The protein localises to the cell membrane. It catalyses the reaction L-cysteinyl-[prolipoprotein] + a 1,2-diacyl-sn-glycero-3-phospho-(1'-sn-glycerol) = an S-1,2-diacyl-sn-glyceryl-L-cysteinyl-[prolipoprotein] + sn-glycerol 1-phosphate + H(+). It participates in protein modification; lipoprotein biosynthesis (diacylglyceryl transfer). Functionally, catalyzes the transfer of the diacylglyceryl group from phosphatidylglycerol to the sulfhydryl group of the N-terminal cysteine of a prolipoprotein, the first step in the formation of mature lipoproteins. The protein is Phosphatidylglycerol--prolipoprotein diacylglyceryl transferase of Bifidobacterium longum (strain DJO10A).